The sequence spans 223 residues: UPF0441 protein YgiB (223 aa).

A compositionally biased stretch (low complexity) spans T178 to T195. Positions T178–G223 are disordered. Over residues A204–G223 the composition is skewed to polar residues.

This sequence belongs to the UPF0441 family.

This is UPF0441 protein YgiB from Salmonella heidelberg (strain SL476).